The chain runs to 429 residues: Glutamate-1-semialdehyde 2,1-aminomutase 2 (429 aa).

An N6-(pyridoxal phosphate)lysine modification is found at Lys268.

Belongs to the class-III pyridoxal-phosphate-dependent aminotransferase family. HemL subfamily. Homodimer. Requires pyridoxal 5'-phosphate as cofactor.

The protein resides in the cytoplasm. The enzyme catalyses (S)-4-amino-5-oxopentanoate = 5-aminolevulinate. It functions in the pathway porphyrin-containing compound metabolism; protoporphyrin-IX biosynthesis; 5-aminolevulinate from L-glutamyl-tRNA(Glu): step 2/2. The polypeptide is Glutamate-1-semialdehyde 2,1-aminomutase 2 (Staphylococcus epidermidis (strain ATCC 35984 / DSM 28319 / BCRC 17069 / CCUG 31568 / BM 3577 / RP62A)).